Reading from the N-terminus, the 85-residue chain is U4-theraphotoxin-Hhn1a (85 aa).

Positions 1 to 22 (MKVTLIAILTCAAVLVLHTTAA) are cleaved as a signal peptide. The propeptide occupies 23 to 48 (EEFEAESQLMEVGMPDTELAAVDEER). Intrachain disulfides connect cysteine 52–cysteine 66, cysteine 56–cysteine 77, and cysteine 71–cysteine 82.

It belongs to the neurotoxin 12 (Hwtx-2) family. 02 (Hwtx-2) subfamily. In terms of assembly, monomer. In terms of tissue distribution, expressed by the venom gland.

The protein localises to the secreted. Functionally, neurotoxin active on both insects and mammals. The polypeptide is U4-theraphotoxin-Hhn1a (Cyriopagopus hainanus (Chinese bird spider)).